The primary structure comprises 190 residues: Xanthine phosphoribosyltransferase (190 aa).

Xanthine is bound by residues leucine 20 and asparagine 27. 128-132 (ANGHA) is a binding site for 5-phospho-alpha-D-ribose 1-diphosphate. Residue lysine 156 participates in xanthine binding.

This sequence belongs to the purine/pyrimidine phosphoribosyltransferase family. Xpt subfamily. Homodimer.

The protein localises to the cytoplasm. The catalysed reaction is XMP + diphosphate = xanthine + 5-phospho-alpha-D-ribose 1-diphosphate. It participates in purine metabolism; XMP biosynthesis via salvage pathway; XMP from xanthine: step 1/1. Converts the preformed base xanthine, a product of nucleic acid breakdown, to xanthosine 5'-monophosphate (XMP), so it can be reused for RNA or DNA synthesis. This chain is Xanthine phosphoribosyltransferase, found in Pseudomonas aeruginosa (strain ATCC 15692 / DSM 22644 / CIP 104116 / JCM 14847 / LMG 12228 / 1C / PRS 101 / PAO1).